The primary structure comprises 137 residues: Envelope glycoprotein L (137 aa).

An N-terminal signal peptide occupies residues 1-25 (MRTVGVFLATCLVTIFVLPTWGNWA). Residues 23–128 (NWAYPCCHVT…SVEDLFGANL (106 aa)) form an interaction with gH region. 2 disulfide bridges follow: C28–C56 and C29–C79.

Belongs to the herpesviridae glycoprotein L family. As to quaternary structure, interacts with glycoprotein H (gH); this interaction is necessary for the correct processing and cell surface expression of gH. The heterodimer gH/gL seems to interact with gB trimers during fusion. The heterodimer gH/gL interacts with host EPHA2 to facilitate virus internalization and fusion.

The protein localises to the virion membrane. Its subcellular location is the host cell membrane. The protein resides in the host Golgi apparatus. It localises to the host trans-Golgi network. The heterodimer glycoprotein H-glycoprotein L is required for the fusion of viral and plasma membranes leading to virus entry into the host cell. Acts as a functional inhibitor of gH and maintains gH in an inhibited form. Upon binding to host integrins, gL dissociates from gH leading to activation of the viral fusion glycoproteins gB and gH. The heterodimer gH/gL targets also host EPHA2 to promote viral entry. This chain is Envelope glycoprotein L, found in Epstein-Barr virus (strain AG876) (HHV-4).